The chain runs to 203 residues: Pyridoxine/pyridoxamine 5'-phosphate oxidase (203 aa).

FMN-binding positions include 50–55 (RMVLLK), 65–66 (YT), Lys-71, Lys-72, and Gln-94. Lys-55 is a substrate binding site. Substrate-binding residues include Tyr-112, Arg-116, and Ser-120. FMN is bound by residues 129-130 (QS) and Trp-174. A substrate-binding site is contributed by 180–182 (RLH). Residue Arg-184 participates in FMN binding.

It belongs to the pyridoxamine 5'-phosphate oxidase family. Homodimer. The cofactor is FMN.

It carries out the reaction pyridoxamine 5'-phosphate + O2 + H2O = pyridoxal 5'-phosphate + H2O2 + NH4(+). The enzyme catalyses pyridoxine 5'-phosphate + O2 = pyridoxal 5'-phosphate + H2O2. It participates in cofactor metabolism; pyridoxal 5'-phosphate salvage; pyridoxal 5'-phosphate from pyridoxamine 5'-phosphate: step 1/1. The protein operates within cofactor metabolism; pyridoxal 5'-phosphate salvage; pyridoxal 5'-phosphate from pyridoxine 5'-phosphate: step 1/1. Its function is as follows. Catalyzes the oxidation of either pyridoxine 5'-phosphate (PNP) or pyridoxamine 5'-phosphate (PMP) into pyridoxal 5'-phosphate (PLP). The protein is Pyridoxine/pyridoxamine 5'-phosphate oxidase of Brucella canis (strain ATCC 23365 / NCTC 10854 / RM-666).